A 180-amino-acid polypeptide reads, in one-letter code: GTP cyclohydrolase 1 (180 aa).

Zn(2+) contacts are provided by Cys-71, His-74, and Cys-142.

Belongs to the GTP cyclohydrolase I family. In terms of assembly, homomer.

The enzyme catalyses GTP + H2O = 7,8-dihydroneopterin 3'-triphosphate + formate + H(+). The protein operates within cofactor biosynthesis; 7,8-dihydroneopterin triphosphate biosynthesis; 7,8-dihydroneopterin triphosphate from GTP: step 1/1. The polypeptide is GTP cyclohydrolase 1 (Helicobacter pylori (strain G27)).